A 22-amino-acid polypeptide reads, in one-letter code: Mu-conotoxin CnIIIA (22 aa).

3 disulfide bridges follow: Cys-3–Cys-15, Cys-4–Cys-21, and Cys-10–Cys-22. Cys-22 carries the post-translational modification Cysteine amide.

The protein belongs to the conotoxin M superfamily. Expressed by the venom duct. Has not been isolated from the crude venom.

It is found in the secreted. Functionally, mu-conotoxins block voltage-gated sodium channels (Nav). This synthetic toxin moderately blocks rNav1.1/SCN1A, rNav1.2/SCN2A, rNav1.3/SCN3A, rNav1.4/SCN4A, rNav1.5/SCN5A, and mNav1.6/SCN8A. This block is very slowly reversible. Causes seizures when injected intracranially into mice. The sequence is that of Mu-conotoxin CnIIIA from Conus consors (Singed cone).